We begin with the raw amino-acid sequence, 467 residues long: Glutamate--tRNA ligase (467 aa).

The 'HIGH' region signature appears at 9-19 (PSPTGYLHIGG). Positions 237–241 (KLSKR) match the 'KMSKS' region motif. Lysine 240 is an ATP binding site.

This sequence belongs to the class-I aminoacyl-tRNA synthetase family. Glutamate--tRNA ligase type 1 subfamily. As to quaternary structure, monomer.

It localises to the cytoplasm. The catalysed reaction is tRNA(Glu) + L-glutamate + ATP = L-glutamyl-tRNA(Glu) + AMP + diphosphate. Catalyzes the attachment of glutamate to tRNA(Glu) in a two-step reaction: glutamate is first activated by ATP to form Glu-AMP and then transferred to the acceptor end of tRNA(Glu). This is Glutamate--tRNA ligase from Stenotrophomonas maltophilia (strain R551-3).